The primary structure comprises 93 residues: Small ribosomal subunit protein uS19 (93 aa).

The protein belongs to the universal ribosomal protein uS19 family.

In terms of biological role, protein S19 forms a complex with S13 that binds strongly to the 16S ribosomal RNA. In Renibacterium salmoninarum (strain ATCC 33209 / DSM 20767 / JCM 11484 / NBRC 15589 / NCIMB 2235), this protein is Small ribosomal subunit protein uS19.